Here is a 363-residue protein sequence, read N- to C-terminus: Spermidine/putrescine import ATP-binding protein PotA (363 aa).

The region spanning 6–236 (VEFKNVIKKY…PINHFVADFI (231 aa)) is the ABC transporter domain. 38–45 (GPSGCGKT) lines the ATP pocket.

It belongs to the ABC transporter superfamily. Spermidine/putrescine importer (TC 3.A.1.11.1) family. As to quaternary structure, the complex is composed of two ATP-binding proteins (PotA), two transmembrane proteins (PotB and PotC) and a solute-binding protein (PotD).

It is found in the cell membrane. The enzyme catalyses ATP + H2O + polyamine-[polyamine-binding protein]Side 1 = ADP + phosphate + polyamineSide 2 + [polyamine-binding protein]Side 1.. In terms of biological role, part of the ABC transporter complex PotABCD involved in spermidine/putrescine import. Responsible for energy coupling to the transport system. In Latilactobacillus sakei subsp. sakei (strain 23K) (Lactobacillus sakei subsp. sakei), this protein is Spermidine/putrescine import ATP-binding protein PotA.